The sequence spans 440 residues: Transposon Ty1-GR1 Gag polyprotein (440 aa).

The span at 1–16 (MESQQLSQHSHISHGS) shows a compositional bias: low complexity. 3 disordered regions span residues 1 to 93 (MESQ…MMTQ), 126 to 173 (PQSQ…RPPP), and 352 to 440 (GSRN…PGTY). Polar residues-rich tracts occupy residues 48–60 (TKAN…TPAS), 71–93 (SPQT…MMTQ), and 127–152 (QSQF…GNTF). The span at 153 to 165 (TDSSSADSDMTST) shows a compositional bias: low complexity. An RNA-binding region spans residues 299 to 401 (NNGIHINNKV…NSKSKTARAH (103 aa)). Residues 402–418 (NVSTSNNSPSTDNDSIS) are compositionally biased toward low complexity. Ser-416 is modified (phosphoserine). Polar residues predominate over residues 419-428 (KSTTEPIQLN). Positions 429 to 440 (NKHDLHLRPGTY) are enriched in basic and acidic residues.

Homotrimer.

The protein localises to the cytoplasm. In terms of biological role, capsid protein (CA) is the structural component of the virus-like particle (VLP), forming the shell that encapsulates the retrotransposons dimeric RNA genome. The particles are assembled from trimer-clustered units and there are holes in the capsid shells that allow for the diffusion of macromolecules. CA also has nucleocapsid-like chaperone activity, promoting primer tRNA(i)-Met annealing to the multipartite primer-binding site (PBS), dimerization of Ty1 RNA and initiation of reverse transcription. In Saccharomyces cerevisiae (strain ATCC 204508 / S288c) (Baker's yeast), this protein is Transposon Ty1-GR1 Gag polyprotein (TY1A-GR1).